The chain runs to 432 residues: Ornithine decarboxylase, chloroplastic (432 aa).

Position 95 is an N6-(pyridoxal phosphate)lysine (lysine 95). Pyridoxal 5'-phosphate contacts are provided by residues serine 227, glycine 265, and 298-301; that span reads EPGR. 341 to 342 contributes to the substrate binding site; that stretch reads YD. Cysteine 377 serves as the catalytic Proton donor; shared with dimeric partner. Aspartate 378 contributes to the substrate binding site. A pyridoxal 5'-phosphate-binding site is contributed by tyrosine 406.

Belongs to the Orn/Lys/Arg decarboxylase class-II family. In terms of assembly, homodimer. Only the dimer is catalytically active, as the active sites are constructed of residues from both monomers. It depends on pyridoxal 5'-phosphate as a cofactor.

The protein localises to the plastid. It is found in the chloroplast. The catalysed reaction is L-lysine + H(+) = cadaverine + CO2. It catalyses the reaction L-ornithine + H(+) = putrescine + CO2. It functions in the pathway alkaloid biosynthesis; nicotine biosynthesis. The protein operates within amine and polyamine biosynthesis; putrescine biosynthesis via L-ornithine pathway; putrescine from L-ornithine: step 1/1. Repressed by alpha-difluoromethylornithine (DFMO), 5,5'-dithiobis-(2-nitrobenzoic acid) (DTNB) and salicylaldehyde. Functionally, involved in the biosynthesis of pyridine alkaloid natural products, leading mainly to the production of anabasine, anatabine, nicotine and nornicotine, effective deterrents against herbivores with antiparasitic and pesticide properties (neurotoxins); nornicotine serves as the precursor in the synthesis of the carcinogen compound N'-nitrosonornicotine (NNN). Catalyzes the first and rate-limiting step of polyamine biosynthesis that converts ornithine into putrescine, which is the precursor for the polyamines, spermidine and spermine. Can also use, with a lower efficiency, L-lysine as substrate to produce cadaverine. Polyamines are essential for cell proliferation and are implicated in cellular processes, ranging from DNA replication to apoptosis. The chain is Ornithine decarboxylase, chloroplastic from Nicotiana glutinosa (Tobacco).